The following is a 249-amino-acid chain: Proteasome activator complex subunit 1 (249 aa).

Residues 60-102 are disordered; sequence PLDIPVPDPVKEKEKEERKKQQEKEDKDEKKKGEDEDKGPPCG. Over residues 68–98 the composition is skewed to basic and acidic residues; sequence PVKEKEKEERKKQQEKEDKDEKKKGEDEDKG.

The protein belongs to the PA28 family. As to quaternary structure, heterodimer of PSME1 and PSME2, which forms a hexameric ring. PSME1 can form homoheptamers.

Implicated in immunoproteasome assembly and required for efficient antigen processing. The PA28 activator complex enhances the generation of class I binding peptides by altering the cleavage pattern of the proteasome. The chain is Proteasome activator complex subunit 1 (PSME1) from Homo sapiens (Human).